Here is a 443-residue protein sequence, read N- to C-terminus: Signal recognition particle 54 kDa protein (443 aa).

Residues 107–114 (GVQGSGKT), 189–193 (DTAGR), and 247–250 (TKLD) each bind GTP.

This sequence belongs to the GTP-binding SRP family. SRP54 subfamily. As to quaternary structure, part of the signal recognition particle protein translocation system, which is composed of SRP and FtsY. Archaeal SRP consists of a 7S RNA molecule of 300 nucleotides and two protein subunits: SRP54 and SRP19.

Its subcellular location is the cytoplasm. The catalysed reaction is GTP + H2O = GDP + phosphate + H(+). Functionally, involved in targeting and insertion of nascent membrane proteins into the cytoplasmic membrane. Binds to the hydrophobic signal sequence of the ribosome-nascent chain (RNC) as it emerges from the ribosomes. The SRP-RNC complex is then targeted to the cytoplasmic membrane where it interacts with the SRP receptor FtsY. The protein is Signal recognition particle 54 kDa protein of Pyrococcus abyssi (strain GE5 / Orsay).